Reading from the N-terminus, the 368-residue chain is 4-hydroxy-3-methylbut-2-en-1-yl diphosphate synthase (flavodoxin) (368 aa).

The [4Fe-4S] cluster site is built by C271, C274, C306, and E313.

The protein belongs to the IspG family. [4Fe-4S] cluster is required as a cofactor.

It catalyses the reaction (2E)-4-hydroxy-3-methylbut-2-enyl diphosphate + oxidized [flavodoxin] + H2O + 2 H(+) = 2-C-methyl-D-erythritol 2,4-cyclic diphosphate + reduced [flavodoxin]. It functions in the pathway isoprenoid biosynthesis; isopentenyl diphosphate biosynthesis via DXP pathway; isopentenyl diphosphate from 1-deoxy-D-xylulose 5-phosphate: step 5/6. Functionally, converts 2C-methyl-D-erythritol 2,4-cyclodiphosphate (ME-2,4cPP) into 1-hydroxy-2-methyl-2-(E)-butenyl 4-diphosphate. This Haemophilus influenzae (strain 86-028NP) protein is 4-hydroxy-3-methylbut-2-en-1-yl diphosphate synthase (flavodoxin).